A 139-amino-acid polypeptide reads, in one-letter code: D-ribose pyranase (139 aa).

Catalysis depends on His20, which acts as the Proton donor. Substrate-binding positions include Asp28, His106, and 128 to 130; that span reads YAN.

This sequence belongs to the RbsD / FucU family. RbsD subfamily. Homodecamer.

It is found in the cytoplasm. It catalyses the reaction beta-D-ribopyranose = beta-D-ribofuranose. The protein operates within carbohydrate metabolism; D-ribose degradation; D-ribose 5-phosphate from beta-D-ribopyranose: step 1/2. Its function is as follows. Catalyzes the interconversion of beta-pyran and beta-furan forms of D-ribose. The protein is D-ribose pyranase of Photobacterium profundum (strain SS9).